Here is a 1173-residue protein sequence, read N- to C-terminus: DNA polymerase catalytic subunit (1173 aa).

Disordered regions lie at residues 554–625 and 1123–1144; these read PSLP…SASG and EGPG…PPRK. Over residues 564-578 the composition is skewed to gly residues; sequence GGDGAGLEGGDGGTA. A compositionally biased stretch (acidic residues) spans 591-606; sequence DGEDEDDPEGGDEGEN. A compositionally biased stretch (basic and acidic residues) spans 607–618; sequence GECRENGLEKEG. Positions 1123 to 1138 are enriched in gly residues; the sequence is EGPGRGEGLGVGGGEG.

The protein belongs to the DNA polymerase type-B family.

The protein resides in the host nucleus. It carries out the reaction DNA(n) + a 2'-deoxyribonucleoside 5'-triphosphate = DNA(n+1) + diphosphate. The chain is DNA polymerase catalytic subunit (UL54) from Rattus.